A 483-amino-acid polypeptide reads, in one-letter code: Regulatory protein ViaA (483 aa).

This sequence belongs to the ViaA family. Homodimer. Interacts with RavA.

The protein resides in the cytoplasm. Functionally, component of the RavA-ViaA chaperone complex, which may act on the membrane to optimize the function of some of the respiratory chains. ViaA stimulates the ATPase activity of RavA. The sequence is that of Regulatory protein ViaA from Shigella sonnei (strain Ss046).